A 354-amino-acid chain; its full sequence is Methylthioribose-1-phosphate isomerase (354 aa).

Residues 45–47 (RGA), Arg-87, and Gln-204 contribute to the substrate site. Residue Asp-245 is the Proton donor of the active site. 255-256 (NK) is a substrate binding site.

The protein belongs to the eIF-2B alpha/beta/delta subunits family. MtnA subfamily.

It catalyses the reaction 5-(methylsulfanyl)-alpha-D-ribose 1-phosphate = 5-(methylsulfanyl)-D-ribulose 1-phosphate. It functions in the pathway amino-acid biosynthesis; L-methionine biosynthesis via salvage pathway; L-methionine from S-methyl-5-thio-alpha-D-ribose 1-phosphate: step 1/6. Its function is as follows. Catalyzes the interconversion of methylthioribose-1-phosphate (MTR-1-P) into methylthioribulose-1-phosphate (MTRu-1-P). This Chlorobaculum tepidum (strain ATCC 49652 / DSM 12025 / NBRC 103806 / TLS) (Chlorobium tepidum) protein is Methylthioribose-1-phosphate isomerase.